A 217-amino-acid chain; its full sequence is MSAPLTLALSKGRIFEETLPLLAAAGVQVAEDPETSRKLILPTTDPNLRVIIVRASDVPTYVEYGAADFGVAGKDVLVEHGGSGLYQPIDLNIARCRMSVAVPAGFDYANAVRQGARLRVATKYVETAREHFAAKGVHVDLIKLYGSMELAPLVGLADAIVDLVSSGGTLKANNLVEVEEIMSISSRLVVNQAALKLKRTALKPFLDAFERASQNGN.

It belongs to the ATP phosphoribosyltransferase family. Short subfamily. As to quaternary structure, heteromultimer composed of HisG and HisZ subunits.

The protein localises to the cytoplasm. The catalysed reaction is 1-(5-phospho-beta-D-ribosyl)-ATP + diphosphate = 5-phospho-alpha-D-ribose 1-diphosphate + ATP. It participates in amino-acid biosynthesis; L-histidine biosynthesis; L-histidine from 5-phospho-alpha-D-ribose 1-diphosphate: step 1/9. In terms of biological role, catalyzes the condensation of ATP and 5-phosphoribose 1-diphosphate to form N'-(5'-phosphoribosyl)-ATP (PR-ATP). Has a crucial role in the pathway because the rate of histidine biosynthesis seems to be controlled primarily by regulation of HisG enzymatic activity. The sequence is that of ATP phosphoribosyltransferase from Burkholderia vietnamiensis (strain G4 / LMG 22486) (Burkholderia cepacia (strain R1808)).